The sequence spans 438 residues: Protein translocase subunit SecY (438 aa).

The next 10 membrane-spanning stretches (helical) occupy residues 18-38 (ILFT…PSPG), 76-96 (VGVM…VVIP), 121-141 (IALA…GGLL), 154-174 (IFSL…VMWM), 177-197 (LITE…GIAA), 212-232 (GVIF…VVFV), 269-289 (VIPV…TQLV), 315-335 (PVYI…YVSV), 375-395 (LPGS…LQIG), and 398-418 (GEVQ…GVGL).

This sequence belongs to the SecY/SEC61-alpha family. In terms of assembly, component of the Sec protein translocase complex. Heterotrimer consisting of SecY, SecE and SecG subunits. The heterotrimers can form oligomers, although 1 heterotrimer is thought to be able to translocate proteins. Interacts with the ribosome. Interacts with SecDF, and other proteins may be involved. Interacts with SecA.

Its subcellular location is the cell membrane. Its function is as follows. The central subunit of the protein translocation channel SecYEG. Consists of two halves formed by TMs 1-5 and 6-10. These two domains form a lateral gate at the front which open onto the bilayer between TMs 2 and 7, and are clamped together by SecE at the back. The channel is closed by both a pore ring composed of hydrophobic SecY resides and a short helix (helix 2A) on the extracellular side of the membrane which forms a plug. The plug probably moves laterally to allow the channel to open. The ring and the pore may move independently. In Mycobacterium leprae (strain TN), this protein is Protein translocase subunit SecY.